The sequence spans 586 residues: A-type ATP synthase subunit A (586 aa).

Gly-238–Thr-245 is an ATP binding site.

It belongs to the ATPase alpha/beta chains family. Has multiple subunits with at least A(3), B(3), C, D, E, F, H, I and proteolipid K(x).

Its subcellular location is the cell membrane. The enzyme catalyses ATP + H2O + 4 H(+)(in) = ADP + phosphate + 5 H(+)(out). In terms of biological role, component of the A-type ATP synthase that produces ATP from ADP in the presence of a proton gradient across the membrane. The A chain is the catalytic subunit. This Haloferax volcanii (strain ATCC 29605 / DSM 3757 / JCM 8879 / NBRC 14742 / NCIMB 2012 / VKM B-1768 / DS2) (Halobacterium volcanii) protein is A-type ATP synthase subunit A.